The chain runs to 2545 residues: Methylphloroacetophenone synthase (2545 aa).

The interval 8–261 (AFGALAPWPA…HVAIHEGIPQ (254 aa)) is N-terminal acylcarrier protein transacylase (SAT) domain. The Ketosynthase family 3 (KS3) domain maps to 383–798 (KDAIAIIGMG…GSNAAMIVLE (416 aa)). Residues cysteine 547, histidine 682, and histidine 721 each act as for beta-ketoacyl synthase activity in the active site. The tract at residues 914–1218 (LCFGGQVSDR…VSLQLNKPNS (305 aa)) is malonyl-CoA:ACP transacylase (MAT) domain. Serine 1001 acts as the For acyl/malonyl transferase activity in catalysis. The N-terminal hotdog fold stretch occupies residues 1293–1423 (LPAVLIRLKS…GTVNLKVADD (131 aa)). In terms of domain architecture, PKS/mFAS DH spans 1293–1605 (LPAVLIRLKS…FTDIRRPVPI (313 aa)). Residues 1296–1604 (VLIRLKSFDS…NFTDIRRPVP (309 aa)) are product template (PT) domain. The tract at residues 1449–1605 (RSESLRGNVL…FTDIRRPVPI (157 aa)) is C-terminal hotdog fold. In terms of domain architecture, Carrier spans 1657-1731 (TSIYEDICGL…SLVDYLHGKG (75 aa)). O-(pantetheine 4'-phosphoryl)serine is present on serine 1691. A compositionally biased stretch (low complexity) spans 1748–1768 (SSSHAISTGASSPPDSSGASA). A disordered region spans residues 1748–1773 (SSSHAISTGASSPPDSSGASAMTTPP). The methyltransferase (CMeT) domain stretch occupies residues 1931 to 2163 (FGASETKLLN…GFKHVSWTDG (233 aa)). The tract at residues 2198-2544 (AGVPMEEVVW…YDFICRQLGM (347 aa)) is claisen cyclase (CLC) domain. Active-site for thioesterase activity residues include serine 2321, aspartate 2481, and histidine 2513.

Functionally, methylphloroacetophenone synthase; part of the gene cluster that mediates the biosynthesis of usnic acid, a dibenzofuran lichen product possessing a broad spectrum of biological activities. Two genes, mpas and mpao, comprise the usnic acid biosynthetic gene cluster with a single post-PKS enzyme, the methylphloracetophenone oxidase (mpao). The methylphloroacetophenone synthase (mpas) is a non-reducing polyketide synthase that produces methylphloracetophenone from acetate via a methylated tetraketide intermediate. The methylphloroacetophenone oxidase then carries out the oxidative dimerization of methylphloracetophenone to usnic acid. This Cladonia uncialis (Cup lichen) protein is Methylphloroacetophenone synthase.